The primary structure comprises 152 residues: Psoriasis susceptibility 1 candidate gene 1 protein (152 aa).

Positions 1–31 (MTCTDQKSHSQRALGTQTPALQGPQLLNTDP) are enriched in polar residues. Residues 1-42 (MTCTDQKSHSQRALGTQTPALQGPQLLNTDPSSEETRPPHVN) are disordered.

Expressed in skin. Also found in heart, placenta, liver, skeletal muscle and pancreas.

This is Psoriasis susceptibility 1 candidate gene 1 protein (PSORS1C1) from Homo sapiens (Human).